A 580-amino-acid chain; its full sequence is Microcin-J25 export ATP-binding/permease protein McjD (580 aa).

Helical transmembrane passes span 25–45 (FFSM…SPLI), 66–86 (VLLA…VFLF), 143–163 (VSQN…VVLS), 167–187 (WFSA…NTRL), 261–281 (AVIL…NGVV), and 286–306 (FIMI…IGAL). The ABC transmembrane type-1 domain occupies 25–312 (FFSMLFITSL…IGALLSEIRQ (288 aa)). An ABC transporter domain is found at 345–578 (LSIRELSFSY…NEYISGLASV (234 aa)). 378–385 (GPSGSGKS) is a binding site for ATP.

It belongs to the ABC transporter superfamily. In terms of assembly, homodimer.

It localises to the cell inner membrane. In terms of biological role, is able to protect a cell, which harbors the plasmid pTUC100 encoding microcin J25, against microcin J25. Is required for microcin J25 export out of the producing cells. The sequence is that of Microcin-J25 export ATP-binding/permease protein McjD (mcjD) from Escherichia coli.